The primary structure comprises 759 residues: MSSNNNFDNNKNNNNNNNSNQNNNNIDNGGNNNETNPTTWKFKAQTPTDFNITVRKRRNSEPGVLVQRSYKNYVTHWKLETKKPTKYKDAKEERLRQQAQQQQQAQQQAQQQQQQAQQQQQQQQQQQQQQQQQQQAQQQAQQQQNQHQQNQHQQNQHQQHQQNQNQNQNQNQNQNQNQNQNQNQNQNQNQNQNQNQNQSQNQHLHQLNQHHPIQHQHHSNNHSNNHSNNHPNQQQNHQQNHQQNQYSQQNYQQQNQGQNNYNNNSFQGNSNNNYNNGYNNNSNNSNNNNNNNNNNNNNNNNNNNNNNNNNNKNSISPTSSPLLFPSPSSAFTSIKSTPPKSISGSSSPFQDQARSPSSSFFHDRDLPFSRGGAQRKPSIGDEFKFHPYSLNNKVTNLIDNCNNSNNNNNNNCTESNDDDSPLNGGLGYSRLSQRRISLPILANRPPSPERSLSPIHERNSLNIINGFNKNNNNNNNNNNNNNNSNNNNNNNGNNNPLPHINFENRRPSREEPIVIINNNNDNNYNKIPSQHMHDKKSSPTPRSILKQTISKYHGNECEEEEEYNTNSNYYGDNDNRNISNQNLVASNASQSSGSKLPSIQSLLNDVSISDNKSKSNSNSPTIIGMNNNFVGGANENISKLSSITMNHHSNFNNLVDDNSHISNNNYNNHHNNNNNNNNNTNNNNHNNNINNNNNNNNNSNNNSNNNNNNSNNNNNNNNNSSNNNNNNNNNNNNNSNNNNNNNNDNNNRSPRNMLFYLNK.

Low complexity-rich tracts occupy residues 1–36 (MSSNNNFDNNKNNNNNNNSNQNNNNIDNGGNNNETN), 142–211 (QQQN…NQHH), and 221–347 (NHSN…GSSS). Disordered regions lie at residues 1–47 (MSSN…AQTP), 142–380 (QQQN…PSIG), 409–428 (NNNCTESNDDDSPLNGGLGY), 463–504 (IING…NFEN), and 654–759 (LVDD…YLNK). Polar residues predominate over residues 348 to 360 (PFQDQARSPSSSF). 2 stretches are compositionally biased toward low complexity: residues 463–495 (IINGFNKNNNNNNNNNNNNNNSNNNNNNNGNNN) and 660–747 (HISN…DNNN).

This is an uncharacterized protein from Dictyostelium discoideum (Social amoeba).